Consider the following 693-residue polypeptide: Elongation factor G 1 (693 aa).

In terms of domain architecture, tr-type G spans 4-281; it reads NKLRNIGISA…AVTRFLPSPH (278 aa). Residues 13–20, 80–84, and 134–137 each bind GTP; these read AHIDSGKT, DTPGH, and NKCD.

Belongs to the TRAFAC class translation factor GTPase superfamily. Classic translation factor GTPase family. EF-G/EF-2 subfamily.

Its subcellular location is the cytoplasm. Its function is as follows. Catalyzes the GTP-dependent ribosomal translocation step during translation elongation. During this step, the ribosome changes from the pre-translocational (PRE) to the post-translocational (POST) state as the newly formed A-site-bound peptidyl-tRNA and P-site-bound deacylated tRNA move to the P and E sites, respectively. Catalyzes the coordinated movement of the two tRNA molecules, the mRNA and conformational changes in the ribosome. The polypeptide is Elongation factor G 1 (Borreliella afzelii (strain PKo) (Borrelia afzelii)).